Reading from the N-terminus, the 178-residue chain is Ribosomal RNA small subunit methyltransferase G (178 aa).

S-adenosyl-L-methionine is bound by residues Gly-54, Leu-59, 105-106, and Arg-120; that span reads LE.

This sequence belongs to the methyltransferase superfamily. RNA methyltransferase RsmG family.

The protein localises to the cytoplasm. The enzyme catalyses guanosine(527) in 16S rRNA + S-adenosyl-L-methionine = N(7)-methylguanosine(527) in 16S rRNA + S-adenosyl-L-homocysteine. In terms of biological role, specifically methylates the N7 position of guanine in position 527 of 16S rRNA. The chain is Ribosomal RNA small subunit methyltransferase G from Helicobacter acinonychis (strain Sheeba).